Reading from the N-terminus, the 375-residue chain is Peroxisomal targeting signal 2 receptor (375 aa).

WD repeat units follow at residues 58 to 89, 102 to 133, 172 to 203, 218 to 249, 281 to 312, and 340 to 372; these read LTQD…RLFD, EHER…KIWS, KNRN…SLFD, HSGL…RIWD, AHGL…RIWR, and QHSE…FVWN.

The protein belongs to the WD repeat peroxin-7 family. In terms of assembly, interacts with PEX21.

It is found in the cytoplasm. The protein resides in the cytosol. It localises to the peroxisome matrix. Its function is as follows. Receptor required for the peroxisomal import of proteins containing a C-terminal PTS2-type peroxisomal targeting signal, such as 3-oxoacyl-CoA thiolase. Specifically binds to cargo proteins containing a PTS2 peroxisomal targeting signal in the cytosol. Cargo protein-binding triggers interaction with PEX21 and formation of a ternary complex composed of PEX21 and PEX7 along with PTS2-containing cargo proteins, which is tranlocated into peroxisomes by passing through the PEX13-PEX14 docking complex. The protein is Peroxisomal targeting signal 2 receptor of Saccharomyces cerevisiae (strain ATCC 204508 / S288c) (Baker's yeast).